The primary structure comprises 213 residues: Orotate phosphoribosyltransferase (213 aa).

K26 is a 5-phospho-alpha-D-ribose 1-diphosphate binding site. Residue 34–35 participates in orotate binding; that stretch reads FF. Residues 72-73, R99, K100, K103, H105, and 124-132 each bind 5-phospho-alpha-D-ribose 1-diphosphate; these read YK and DDVITAGTA. Positions 128 and 156 each coordinate orotate.

This sequence belongs to the purine/pyrimidine phosphoribosyltransferase family. PyrE subfamily. Homodimer. It depends on Mg(2+) as a cofactor.

The catalysed reaction is orotidine 5'-phosphate + diphosphate = orotate + 5-phospho-alpha-D-ribose 1-diphosphate. It participates in pyrimidine metabolism; UMP biosynthesis via de novo pathway; UMP from orotate: step 1/2. Its function is as follows. Catalyzes the transfer of a ribosyl phosphate group from 5-phosphoribose 1-diphosphate to orotate, leading to the formation of orotidine monophosphate (OMP). The chain is Orotate phosphoribosyltransferase from Alteromonas mediterranea (strain DSM 17117 / CIP 110805 / LMG 28347 / Deep ecotype).